A 183-amino-acid chain; its full sequence is Glutathione-regulated potassium-efflux system ancillary protein KefG (183 aa).

Belongs to the NAD(P)H dehydrogenase (quinone) family. KefG subfamily. As to quaternary structure, interacts with KefB.

The protein localises to the cell inner membrane. It catalyses the reaction a quinone + NADH + H(+) = a quinol + NAD(+). The enzyme catalyses a quinone + NADPH + H(+) = a quinol + NADP(+). Its function is as follows. Regulatory subunit of a potassium efflux system that confers protection against electrophiles. Required for full activity of KefB. This Serratia proteamaculans (strain 568) protein is Glutathione-regulated potassium-efflux system ancillary protein KefG.